Consider the following 684-residue polypeptide: Translation factor GUF1 homolog, mitochondrial (684 aa).

The tr-type G domain maps to 82–270 (HLIRNFSIIA…AVIERIPQPK (189 aa)). GTP contacts are provided by residues 91 to 98 (AHVDHGKS), 163 to 167 (DTPGH), and 217 to 220 (NKID).

The protein belongs to the TRAFAC class translation factor GTPase superfamily. Classic translation factor GTPase family. LepA subfamily.

The protein resides in the mitochondrion inner membrane. The catalysed reaction is GTP + H2O = GDP + phosphate + H(+). Its function is as follows. Promotes mitochondrial protein synthesis. May act as a fidelity factor of the translation reaction, by catalyzing a one-codon backward translocation of tRNAs on improperly translocated ribosomes. Binds to mitochondrial ribosomes in a GTP-dependent manner. The sequence is that of Translation factor GUF1 homolog, mitochondrial from Physcomitrium patens (Spreading-leaved earth moss).